An 835-amino-acid polypeptide reads, in one-letter code: Pre-mRNA-splicing factor SYF1 (835 aa).

HAT repeat units follow at residues 7–38 (YILDDSDIAFEYELQKSPSVEVWQRYIAHWEA), 46–77 (RSARHILWLYERMVTQFPTLTVWEQYIGWFRR), 313–348 (ADFDKMEKVLTKALSETVKTNEFIAIYTYHVNFEQA), 414–456 (EDFD…VYWS), 458–494 (KSYEEARTIYESATKVPFPDLQDLEIVWHTWAVNEFQ), 517–551 (SIIDRFKSENRRLPSQTILFTSKRLWNYYIDLLES), 589–623 (NNLHGSLQVYEKGINMFPPEICYELWTLLLDEVME), 628–664 (ATKERIRELFEQCLQQLGNTDININSIYVKYSDFEIH), 707–741 (LGPDSLRQLLSECIQELPNSKAITYVLKFTKLEMS), and 743–777 (SDYTRARELLQYGAQLLPPIKNEELWGLWEQFELE).

Belongs to the crooked-neck family. As to quaternary structure, associated with the spliceosome.

It is found in the nucleus. Its function is as follows. Involved in pre-mRNA splicing and cell cycle progression. The sequence is that of Pre-mRNA-splicing factor SYF1 (SYF1) from Candida glabrata (strain ATCC 2001 / BCRC 20586 / JCM 3761 / NBRC 0622 / NRRL Y-65 / CBS 138) (Yeast).